A 299-amino-acid polypeptide reads, in one-letter code: Bifunctional protein FolD (299 aa).

NADP(+) is bound by residues 179 to 181 (GPG) and Ile-245.

The protein belongs to the tetrahydrofolate dehydrogenase/cyclohydrolase family. Homodimer.

The enzyme catalyses (6R)-5,10-methylene-5,6,7,8-tetrahydrofolate + NADP(+) = (6R)-5,10-methenyltetrahydrofolate + NADPH. It catalyses the reaction (6R)-5,10-methenyltetrahydrofolate + H2O = (6R)-10-formyltetrahydrofolate + H(+). The protein operates within one-carbon metabolism; tetrahydrofolate interconversion. In terms of biological role, catalyzes the oxidation of 5,10-methylenetetrahydrofolate to 5,10-methenyltetrahydrofolate and then the hydrolysis of 5,10-methenyltetrahydrofolate to 10-formyltetrahydrofolate. The polypeptide is Bifunctional protein FolD (Deinococcus radiodurans (strain ATCC 13939 / DSM 20539 / JCM 16871 / CCUG 27074 / LMG 4051 / NBRC 15346 / NCIMB 9279 / VKM B-1422 / R1)).